The following is a 232-amino-acid chain: Triggering receptor expressed on myeloid cells 1 (232 aa).

Positions 1–20 (MRKAGVWGLLWMLFIEEIQA) are cleaved as a signal peptide. Positions 21–125 (AAEVFEEKCT…DPIILFHPVR (105 aa)) constitute an Ig-like V-type domain. Topologically, residues 21-203 (AAEVFEEKCT…THVNRAPGIS (183 aa)) are extracellular. Cysteine 41 and cysteine 109 form a disulfide bridge. A disordered region spans residues 152–186 (PLPVTTKLRPRPRPRPKPVTQPIPTSADRLSSPGF). N-linked (GlcNAc...) asparagine glycosylation occurs at asparagine 192. The helical transmembrane segment at 204–224 (IIIPAACGLLSKTLVFIGLFA) threads the bilayer. The Cytoplasmic segment spans residues 225 to 232 (VTHRSFAS).

In terms of assembly, monomer. Homomultimer; when activated. Interacts with TYROBP/DAP12. Interacts with TLR4. Detected in bone marrow, tongue, lung, liver, thymus, spleen, jejunum, ileum and lymph nodes.

It is found in the cell membrane. Functionally, cell surface receptor that plays important roles in innate and adaptive immunity by amplifying inflammatory responses. Upon activation by various ligands such as PGLYRP1, HMGB1 or HSP70, multimerizes and forms a complex with transmembrane adapter TYROBP/DAP12. In turn, initiates a SYK-mediated cascade of tyrosine phosphorylation, activating multiple downstream mediators such as BTK, MAPK1, MAPK3 or phospholipase C-gamma. This cascade promotes the neutrophil- and macrophage-mediated release of pro-inflammatory cytokines and/or chemokines, as well as their migration and thereby amplifies inflammatory responses that are triggered by bacterial and fungal infections. By also promoting the amplification of inflammatory signals that are initially triggered by Toll-like receptor (TLR) and NOD-like receptor engagement, plays a major role in the pathophysiology of acute and chronic inflammatory diseases of different etiologies including septic shock and atherosclerosis. In Bos taurus (Bovine), this protein is Triggering receptor expressed on myeloid cells 1 (TREM1).